The primary structure comprises 67 residues: MRMFRITACVPSQTRIRTQRELQNTYFTKLVPYDNWFREQQRIMKMGGKIVKVELATGRPGTNAGLA.

The 56-residue stretch at Met-1–Ala-56 folds into the CpcD-like domain.

It belongs to the phycobilisome linker protein family.

It localises to the cellular thylakoid membrane. In terms of biological role, rod linker protein, associated with allophycocyanin. Linker polypeptides determine the state of aggregation and the location of the disk-shaped phycobiliprotein units within the phycobilisome and modulate their spectroscopic properties in order to mediate a directed and optimal energy transfer. This Synechocystis sp. (strain PCC 6714) (Aphanocapsa sp. (strain PCC 6714)) protein is Phycobilisome 7.8 kDa linker polypeptide, allophycocyanin-associated, core (apcC).